We begin with the raw amino-acid sequence, 103 residues long: uncharacterized protein (103 aa).

This is an uncharacterized protein from Saccharomyces cerevisiae (strain ATCC 204508 / S288c) (Baker's yeast).